We begin with the raw amino-acid sequence, 402 residues long: MTDSGQPAIADHFYRIPRISGLIVGLWPQRIRGGGGRPWHAHLLFVFAFAMVVVGAVGEVSYGCVHLDNLVVALEAFCPGTTKAVCVLKLWVFFRSNRRWAELVQRLRAILWESRRQEAQRMLVGLATTANRLSLLLLSSGTATNAAFTLQPLIMGLYRWIVQLPGQTELPFNIILPSFAVQPGVFPLTYVLLTASGACTVFAFSFVDGFFICSCLYICGAFRLVQQDIRRIFADLHGDSVDVFTEEMNAEVRHRLAQVVERHNAIIDFCTDLTRQFTVIVLMHFLSAAFVLCSTILDIMLNTSSLSGLTYICYIIAALTQLFLYCFGGNHVSESSAAVADVLYDMEWYKCDARTRKVILMILRRSQRAKTIAVPFFTPSLPALRSILSTAGSYITLLKTFL.

The Cytoplasmic portion of the chain corresponds to 1–42; that stretch reads MTDSGQPAIADHFYRIPRISGLIVGLWPQRIRGGGGRPWHAH. Residues 43 to 63 traverse the membrane as a helical segment; sequence LLFVFAFAMVVVGAVGEVSYG. Residues 64 to 73 are Extracellular-facing; it reads CVHLDNLVVA. The helical transmembrane segment at 74 to 94 threads the bilayer; it reads LEAFCPGTTKAVCVLKLWVFF. Topologically, residues 95–134 are cytoplasmic; the sequence is RSNRRWAELVQRLRAILWESRRQEAQRMLVGLATTANRLS. The chain crosses the membrane as a helical span at residues 135-155; it reads LLLLSSGTATNAAFTLQPLIM. The Extracellular portion of the chain corresponds to 156–173; the sequence is GLYRWIVQLPGQTELPFN. A helical transmembrane segment spans residues 174–194; it reads IILPSFAVQPGVFPLTYVLLT. Residues 195–201 are Cytoplasmic-facing; that stretch reads ASGACTV. A helical transmembrane segment spans residues 202–222; sequence FAFSFVDGFFICSCLYICGAF. Topologically, residues 223–276 are extracellular; it reads RLVQQDIRRIFADLHGDSVDVFTEEMNAEVRHRLAQVVERHNAIIDFCTDLTRQ. Residues 277–297 form a helical membrane-spanning segment; that stretch reads FTVIVLMHFLSAAFVLCSTIL. Residues 298–307 are Cytoplasmic-facing; the sequence is DIMLNTSSLS. The chain crosses the membrane as a helical span at residues 308–328; the sequence is GLTYICYIIAALTQLFLYCFG. At 329–402 the chain is on the extracellular side; that stretch reads GNHVSESSAA…SYITLLKTFL (74 aa).

It belongs to the insect chemoreceptor superfamily. Heteromeric odorant receptor channel (TC 1.A.69) family. Or1a subfamily. Interacts with Orco. Complexes exist early in the endomembrane system in olfactory sensory neurons (OSNs), coupling these complexes to the conserved ciliary trafficking pathway. As to expression, not expressed in either the antenna or maxillary palp.

Its subcellular location is the cell membrane. Odorant receptor which mediates acceptance or avoidance behavior, depending on its substrates. The odorant receptor repertoire encodes a large collection of odor stimuli that vary widely in identity, intensity, and duration. May form a complex with Orco to form odorant-sensing units, providing sensitive and prolonged odorant signaling and calcium permeability. This Drosophila melanogaster (Fruit fly) protein is Odorant receptor 22c (Or22c).